The following is an 830-amino-acid chain: FYN-binding protein 1 (830 aa).

The tract at residues 1 to 501 (MDGKTDVKSL…REKKEQELRK (501 aa)) is disordered. The residue at position 13 (lysine 13) is an N6-acetyllysine. Over residues 15–55 (NTGSNPTEEVSTSSRPFKVAGQNSPSGIQSKKNLFDNQGNA) the composition is skewed to polar residues. 2 positions are modified to phosphoserine: serine 38 and serine 56. The segment covering 79-89 (TYEEKSEKEPK) has biased composition (basic and acidic residues). Position 233 is a phosphoserine (serine 233). Composition is skewed to basic and acidic residues over residues 248-259 (PAKEDPEDKDHG) and 284-296 (NSEE…KTDI). Position 329 is a phosphoserine (serine 329). The segment covering 330–339 (QEKEGDKDSA) has biased composition (basic and acidic residues). Pro residues-rich tracts occupy residues 344-362 (KPLP…PSRP) and 391-407 (LPPP…PLPA). The tract at residues 347–447 (PPLSVLGPPP…QDGVMHSDGT (101 aa)) is interaction with SKAP1. A compositionally biased stretch (acidic residues) spans 450 to 464 (LEEEQESDGEMYEDI). Phosphoserine is present on serine 456. Residues 461–464 (YEDI) carry the SH2-binding motif. The span at 465-500 (ESSKERDKKREKEEKKRLELERKEQKEREKKEQELR) shows a compositional bias: basic and acidic residues. Residues 465 to 502 (ESSKERDKKREKEEKKRLELERKEQKEREKKEQELRKK) are a coiled coil. Residues 479-486 (KKRLELER) carry the Nuclear localization signal motif. The 62-residue stretch at 510–571 (QVIHHAKACC…KTTAVKIDYD (62 aa)) folds into the SH3 1 domain. Position 570 is a phosphotyrosine (tyrosine 570). A Phosphoserine modification is found at serine 572. Positions 595 to 598 (YDDV) match the SH2-binding; to LCP2 motif. Disordered stretches follow at residues 601–646 (QDAP…DEKT) and 660–739 (KDER…EKEE). The span at 621 to 636 (ADDDIYDGIEEEDADD) shows a compositional bias: acidic residues. An SH2-binding; to FYN motif is present at residues 626–629 (YDGI). Positions 660 to 675 (KDERKKSIREKPKVSE) are enriched in basic and acidic residues. Acidic residues predominate over residues 693–703 (VGEEVYDDVDA). Residue tyrosine 698 is modified to Phosphotyrosine. Positions 722–739 (TKAEEKDPKKLKKQEKEE) are enriched in basic and acidic residues. The Nuclear localization signal signature appears at 732–739 (LKKQEKEE). The SH3 2 domain occupies 747–815 (KYDGEIRVLY…LRSYLVDNDG (69 aa)).

Part of a complex consisting of SKAP2, FYB1 and PTPNS1. Part of a complex consisting of SKAP2, FYB1 and LILRB3. Part of a complex consisting of SKAP1, FYB1 and CLNK. Interacts with CLNK (via its SH2 domain) and FYN; this interaction allows SKAP1 and FYB1 to recruit FYN to the complex, thus promoting the phosphorylation of CLNK by FYN. Interacts with FYN. Interacts with LCP2. Interacts with SKAP1. Interacts with SKAP2. Interacts with FASLG. Interacts with EVL. Interacts with TMEM47. Interacts with LCK. In terms of processing, T-cell receptor ligation leads to increased tyrosine phosphorylation.

It is found in the cytoplasm. It localises to the nucleus. Its subcellular location is the cell junction. Its function is as follows. Acts as an adapter protein of the FYN and LCP2 signaling cascades in T-cells. May play a role in linking T-cell signaling to remodeling of the actin cytoskeleton. Modulates the expression of IL2. Involved in platelet activation. Prevents the degradation of SKAP1 and SKAP2. May be involved in high affinity immunoglobulin epsilon receptor signaling in mast cells. In Rattus norvegicus (Rat), this protein is FYN-binding protein 1.